Reading from the N-terminus, the 520-residue chain is Phosphoenolpyruvate carboxykinase (ATP) (520 aa).

Positions 61, 196, and 202 each coordinate substrate. ATP is bound by residues Lys202, His222, and 238 to 246 (GLSGTGKTT). Residues Lys202 and His222 each coordinate Mn(2+). Mn(2+) is bound at residue Asp259. ATP contacts are provided by residues Glu287, Arg324, 443-444 (RI), and Thr449. Arg324 serves as a coordination point for substrate.

The protein belongs to the phosphoenolpyruvate carboxykinase (ATP) family. Mn(2+) serves as cofactor.

Its subcellular location is the cytoplasm. The catalysed reaction is oxaloacetate + ATP = phosphoenolpyruvate + ADP + CO2. It functions in the pathway carbohydrate biosynthesis; gluconeogenesis. In terms of biological role, involved in the gluconeogenesis. Catalyzes the conversion of oxaloacetate (OAA) to phosphoenolpyruvate (PEP) through direct phosphoryl transfer between the nucleoside triphosphate and OAA. The sequence is that of Phosphoenolpyruvate carboxykinase (ATP) from Amoebophilus asiaticus (strain 5a2).